Consider the following 151-residue polypeptide: Large ribosomal subunit protein uL13 (151 aa).

This sequence belongs to the universal ribosomal protein uL13 family. In terms of assembly, part of the 50S ribosomal subunit.

Its function is as follows. This protein is one of the early assembly proteins of the 50S ribosomal subunit, although it is not seen to bind rRNA by itself. It is important during the early stages of 50S assembly. In Synechocystis sp. (strain ATCC 27184 / PCC 6803 / Kazusa), this protein is Large ribosomal subunit protein uL13.